The sequence spans 66 residues: Large ribosomal subunit protein bL35 (66 aa).

Belongs to the bacterial ribosomal protein bL35 family.

In Cereibacter sphaeroides (strain ATCC 17029 / ATH 2.4.9) (Rhodobacter sphaeroides), this protein is Large ribosomal subunit protein bL35.